The primary structure comprises 345 residues: Probable glucan endo-1,3-beta-glucosidase BG4 (345 aa).

Residues 1–22 (MLYSPKKLFLFFLSCIVLYVNS) form the signal peptide. N-linked (GlcNAc...) asparagine glycans are attached at residues Asn-23 and Asn-119. Glu-128 (proton donor) is an active-site residue. Glu-267 serves as the catalytic Nucleophile. Asn-277 and Asn-306 each carry an N-linked (GlcNAc...) asparagine glycan.

The protein belongs to the glycosyl hydrolase 17 family.

It is found in the secreted. The enzyme catalyses Hydrolysis of (1-&gt;3)-beta-D-glucosidic linkages in (1-&gt;3)-beta-D-glucans.. May play a role in plant defense against pathogens. The polypeptide is Probable glucan endo-1,3-beta-glucosidase BG4 (Arabidopsis thaliana (Mouse-ear cress)).